We begin with the raw amino-acid sequence, 364 residues long: Aminomethyltransferase (364 aa).

Belongs to the GcvT family. As to quaternary structure, the glycine cleavage system is composed of four proteins: P, T, L and H.

The catalysed reaction is N(6)-[(R)-S(8)-aminomethyldihydrolipoyl]-L-lysyl-[protein] + (6S)-5,6,7,8-tetrahydrofolate = N(6)-[(R)-dihydrolipoyl]-L-lysyl-[protein] + (6R)-5,10-methylene-5,6,7,8-tetrahydrofolate + NH4(+). The glycine cleavage system catalyzes the degradation of glycine. This chain is Aminomethyltransferase, found in Thermotoga maritima (strain ATCC 43589 / DSM 3109 / JCM 10099 / NBRC 100826 / MSB8).